The following is a 117-amino-acid chain: Large ribosomal subunit protein bL17 (117 aa).

Belongs to the bacterial ribosomal protein bL17 family. Part of the 50S ribosomal subunit. Contacts protein L32.

The sequence is that of Large ribosomal subunit protein bL17 from Neorickettsia sennetsu (strain ATCC VR-367 / Miyayama) (Ehrlichia sennetsu).